Consider the following 601-residue polypeptide: Sulfite reductase [NADPH] flavoprotein alpha-component (601 aa).

One can recognise a Flavodoxin-like domain in the interval 64–202; it reads ITLISASQTG…SAQQWRQQIV (139 aa). FMN-binding positions include 70-75, 117-120, and 153-162; these read SQTGNA, STQG, and LGDTSYEHFC. One can recognise an FAD-binding FR-type domain in the interval 236–450; that stretch reads AAPLTAQLSV…IEHNDNFRLP (215 aa). FAD contacts are provided by residues Thr-324, Lys-358, 388-391, 406-408, Tyr-412, and 421-424; these read RLYS, TVG, and GGAS. NADP(+)-binding positions include 521-522, 527-531, and Asp-563; these read SR and KIYVQ. Tyr-601 lines the FAD pocket.

This sequence belongs to the NADPH-dependent sulphite reductase flavoprotein subunit CysJ family. In the N-terminal section; belongs to the flavodoxin family. The protein in the C-terminal section; belongs to the flavoprotein pyridine nucleotide cytochrome reductase family. As to quaternary structure, alpha(8)-beta(8). The alpha component is a flavoprotein, the beta component is a hemoprotein. FAD is required as a cofactor. FMN serves as cofactor.

It catalyses the reaction hydrogen sulfide + 3 NADP(+) + 3 H2O = sulfite + 3 NADPH + 4 H(+). The protein operates within sulfur metabolism; hydrogen sulfide biosynthesis; hydrogen sulfide from sulfite (NADPH route): step 1/1. Functionally, component of the sulfite reductase complex that catalyzes the 6-electron reduction of sulfite to sulfide. This is one of several activities required for the biosynthesis of L-cysteine from sulfate. The flavoprotein component catalyzes the electron flow from NADPH -&gt; FAD -&gt; FMN to the hemoprotein component. The chain is Sulfite reductase [NADPH] flavoprotein alpha-component from Yersinia enterocolitica serotype O:8 / biotype 1B (strain NCTC 13174 / 8081).